The primary structure comprises 185 residues: Threonylcarbamoyl-AMP synthase (185 aa).

Positions 4–185 (SWRVQQAARE…LATGEVVRPG (182 aa)) constitute a YrdC-like domain.

This sequence belongs to the SUA5 family. TsaC subfamily.

It localises to the cytoplasm. The enzyme catalyses L-threonine + hydrogencarbonate + ATP = L-threonylcarbamoyladenylate + diphosphate + H2O. Required for the formation of a threonylcarbamoyl group on adenosine at position 37 (t(6)A37) in tRNAs that read codons beginning with adenine. Catalyzes the conversion of L-threonine, HCO(3)(-)/CO(2) and ATP to give threonylcarbamoyl-AMP (TC-AMP) as the acyladenylate intermediate, with the release of diphosphate. The chain is Threonylcarbamoyl-AMP synthase from Pseudomonas entomophila (strain L48).